The primary structure comprises 479 residues: MMRFLDGHPPGYDLTYNDVFIVPNRSEVASRFDVDLSTADGSGTTIPVVVANMTAVAGRRMAETVARRGGIVILPQDLPIPAVKQTVAFVKSRDLVLDTPVTLAPDDSVSDAMALIHKRAHGVAVVILEGRPIGLVRESSCLGVDRFTRVRDIAVTDYVTAPAGTEPRKIFDLLEHAPVDVAVLTDADGTLAGVLSRTGAIRAGIYTPATDSAGRLRIGAAVGINGDVGAKARALAEAGVDVLVIDTAHGHQVKTLDAIKAVSALDLGLPLAAGNVVSAEGTRDLLKAGANVVKVGVGPGAMCTTRMMTGVGRPQFSAVLECASAARQLGGHIWADGGIRHPRDVALALAAGASNVMIGSWFAGTYESPGDLMRDRDDQPYKESYGMASKRAVVARTGADNPFDRARKALFEEGISTSRMGLDPDRGGVEDLIDHITSGVRSTCTYVGASNLAELHERAVVGVQSGAGFAEGHPLPAGW.

2 consecutive CBS domains span residues 96 to 153 and 154 to 212; these read VLDT…VRDI and AVTD…ATDS. NADP(+) is bound by residues 246–248 and 296–298; these read DTA and GVG. The active-site Thioimidate intermediate is Cys-303.

It belongs to the IMPDH/GMPR family. GuaB1 subfamily. It depends on a monovalent cation as a cofactor.

It catalyses the reaction IMP + NH4(+) + NADP(+) = GMP + NADPH + 2 H(+). The protein operates within purine metabolism; IMP biosynthesis via salvage pathway. Functionally, involved in the purine-salvage pathway. Catalyzes the NADPH-dependent conversion of GMP to IMP. The polypeptide is GMP reductase (Mycobacterium bovis (strain ATCC BAA-935 / AF2122/97)).